An 85-amino-acid chain; its full sequence is U4-theraphotoxin-Hhn1o (85 aa).

A signal peptide spans 1–22; it reads MKVTLIAILTCAAVLVLHTTAA. A propeptide spanning residues 23 to 48 is cleaved from the precursor; that stretch reads EELEAESQLMEVGMPDTELAAVDEER. 3 disulfides stabilise this stretch: cysteine 52–cysteine 66, cysteine 56–cysteine 77, and cysteine 71–cysteine 82.

This sequence belongs to the neurotoxin 12 (Hwtx-2) family. 02 (Hwtx-2) subfamily. Expressed by the venom gland.

It is found in the secreted. Its function is as follows. Postsynaptic neurotoxin. The polypeptide is U4-theraphotoxin-Hhn1o (Cyriopagopus hainanus (Chinese bird spider)).